The chain runs to 103 residues: Pyrimidine/purine nucleoside phosphorylase (103 aa).

This sequence belongs to the nucleoside phosphorylase PpnP family.

It carries out the reaction a purine D-ribonucleoside + phosphate = a purine nucleobase + alpha-D-ribose 1-phosphate. The catalysed reaction is adenosine + phosphate = alpha-D-ribose 1-phosphate + adenine. The enzyme catalyses cytidine + phosphate = cytosine + alpha-D-ribose 1-phosphate. It catalyses the reaction guanosine + phosphate = alpha-D-ribose 1-phosphate + guanine. It carries out the reaction inosine + phosphate = alpha-D-ribose 1-phosphate + hypoxanthine. The catalysed reaction is thymidine + phosphate = 2-deoxy-alpha-D-ribose 1-phosphate + thymine. The enzyme catalyses uridine + phosphate = alpha-D-ribose 1-phosphate + uracil. It catalyses the reaction xanthosine + phosphate = alpha-D-ribose 1-phosphate + xanthine. Its function is as follows. Catalyzes the phosphorolysis of diverse nucleosides, yielding D-ribose 1-phosphate and the respective free bases. Can use uridine, adenosine, guanosine, cytidine, thymidine, inosine and xanthosine as substrates. Also catalyzes the reverse reactions. The chain is Pyrimidine/purine nucleoside phosphorylase from Cupriavidus metallidurans (strain ATCC 43123 / DSM 2839 / NBRC 102507 / CH34) (Ralstonia metallidurans).